A 64-amino-acid chain; its full sequence is Conotoxin VnMRCL-04 (64 aa).

The signal sequence occupies residues 1 to 22 (MRCLPVFVILLLLIASAPSVDA). The propeptide occupies 23 to 48 (RPKTKDDVPLASFHGNAERTLLNILR). Residue tryptophan 63 is modified to Tryptophan amide.

The protein belongs to the conotoxin T superfamily. In terms of processing, contains 2 disulfide bonds that can be either 'C1-C3, C2-C4' or 'C1-C4, C2-C3', since these disulfide connectivities have been observed for conotoxins with cysteine framework V (for examples, see AC P0DQQ7 and AC P81755). Expressed by the venom duct.

It localises to the secreted. In Conus ventricosus (Mediterranean cone), this protein is Conotoxin VnMRCL-04.